We begin with the raw amino-acid sequence, 240 residues long: Citrate synthase-lysine N-methyltransferase CSKMT, mitochondrial (240 aa).

The N-terminal 21 residues, Met1–Phe21, are a transit peptide targeting the mitochondrion.

This sequence belongs to the methyltransferase superfamily.

The protein localises to the mitochondrion. The enzyme catalyses L-lysyl-[citrate synthase] + S-adenosyl-L-methionine = N(6)-methyl-L-lysyl-[citrate synthase] + S-adenosyl-L-homocysteine + H(+). It catalyses the reaction N(6)-methyl-L-lysyl-[citrate synthase] + S-adenosyl-L-methionine = N(6),N(6)-dimethyl-L-lysyl-[citrate synthase] + S-adenosyl-L-homocysteine + H(+). It carries out the reaction N(6),N(6)-dimethyl-L-lysyl-[citrate synthase] + S-adenosyl-L-methionine = N(6),N(6),N(6)-trimethyl-L-lysyl-[citrate synthase] + S-adenosyl-L-homocysteine + H(+). Citrate synthase-lysine methyltransferase activity is inhibited by S-adenosylhomocysteine (AdoHcy) and oxaloacetate (OAA). Protein-lysine methyltransferase that selectively trimethylates citrate synthase (CS) in mitochondria. Seems to conduct trimethylation in a highly distributive manner rather than in a processive manner, and thus introduces a single methyl group per binding event. The sequence is that of Citrate synthase-lysine N-methyltransferase CSKMT, mitochondrial from Pongo abelii (Sumatran orangutan).